A 483-amino-acid chain; its full sequence is MTFAANFSLVLPEVILGVSALVLLVWGAFQRKTSPLFTGAAVLALLGAAVAAVVGPHGHAFNGVYAADAAATYAKVAIYLSSAVAIVLGDRWLAVRGDQKFEYAVLVILAAVGMGVTASAGDLISLYIGVELQSLALYVLAAFRRDDAKSSEAGLKYFVLGALSSGLLLYGASLIYGFAGSTRFADIAAVGAAAAHGTHGVGLLFGLVFLICGLAFKVSAAPFHMWTPDVYEGAPTSVVGFFAAAPKLAAMMMFARVLGDAFPDSVAQWRQVLIIASLASVFVGAFAGLAQTNLKRLWAYSSIANVGYALLGVATGGETGLHSMLLFMTLYMVDVTGFFACLQALSRDGKPMETIEDMAGLVKERPGIAVAMTAFSLSALGMPPFSGFWAKFYVFGAAMGSGDVLLQWAAVLGLVGSVVAAFYYLRLIKAMWFDAPAGAVDKPQPTARAVGFAAALFSFPVVMVALIWLDPAARAAAAAFGHA.

A run of 13 helical transmembrane segments spans residues 9-29 (LVLPEVILGVSALVLLVWGAF), 35-55 (PLFTGAAVLALLGAAVAAVVG), 69-89 (AAATYAKVAIYLSSAVAIVLG), 104-124 (AVLVILAAVGMGVTASAGDLI), 158-178 (FVLGALSSGLLLYGASLIYGF), 201-221 (VGLLFGLVFLICGLAFKVSAA), 234-254 (APTSVVGFFAAAPKLAAMMMF), 272-292 (VLIIASLASVFVGAFAGLAQT), 297-317 (LWAYSSIANVGYALLGVATGG), 325-345 (LLFMTLYMVDVTGFFACLQAL), 368-388 (IAVAMTAFSLSALGMPPFSGF), 404-424 (VLLQWAAVLGLVGSVVAAFYY), and 449-469 (AVGFAAALFSFPVVMVALIWL).

It belongs to the complex I subunit 2 family. As to quaternary structure, NDH-1 is composed of 14 different subunits. Subunits NuoA, H, J, K, L, M, N constitute the membrane sector of the complex.

The protein localises to the cell inner membrane. The catalysed reaction is a quinone + NADH + 5 H(+)(in) = a quinol + NAD(+) + 4 H(+)(out). In terms of biological role, NDH-1 shuttles electrons from NADH, via FMN and iron-sulfur (Fe-S) centers, to quinones in the respiratory chain. The immediate electron acceptor for the enzyme in this species is believed to be ubiquinone. Couples the redox reaction to proton translocation (for every two electrons transferred, four hydrogen ions are translocated across the cytoplasmic membrane), and thus conserves the redox energy in a proton gradient. In Caulobacter sp. (strain K31), this protein is NADH-quinone oxidoreductase subunit N.